The primary structure comprises 968 residues: uncharacterized protein (968 aa).

Disordered regions lie at residues 124–177 (SSIS…FSFP), 348–437 (QEDS…VNDS), 572–595 (TTTT…QQNT), 608–627 (PKAS…GSSK), and 837–877 (KASK…KKGK). Residues 131-157 (TIESNYLSNPSSPCQSTPILESSTPFS) show a composition bias toward polar residues. Low complexity-rich tracts occupy residues 158 to 177 (QKLM…FSFP), 352 to 431 (NNNN…NCNN), and 572 to 593 (TTTT…QQQQ). The segment covering 841-857 (DSSSSPTASSAAPGDSS) has biased composition (low complexity).

This is an uncharacterized protein from Dictyostelium discoideum (Social amoeba).